The following is a 568-amino-acid chain: Proline--tRNA ligase (568 aa).

It belongs to the class-II aminoacyl-tRNA synthetase family. ProS type 1 subfamily. As to quaternary structure, homodimer.

The protein localises to the cytoplasm. It carries out the reaction tRNA(Pro) + L-proline + ATP = L-prolyl-tRNA(Pro) + AMP + diphosphate. In terms of biological role, catalyzes the attachment of proline to tRNA(Pro) in a two-step reaction: proline is first activated by ATP to form Pro-AMP and then transferred to the acceptor end of tRNA(Pro). As ProRS can inadvertently accommodate and process non-cognate amino acids such as alanine and cysteine, to avoid such errors it has two additional distinct editing activities against alanine. One activity is designated as 'pretransfer' editing and involves the tRNA(Pro)-independent hydrolysis of activated Ala-AMP. The other activity is designated 'posttransfer' editing and involves deacylation of mischarged Ala-tRNA(Pro). The misacylated Cys-tRNA(Pro) is not edited by ProRS. The protein is Proline--tRNA ligase of Halorhodospira halophila (strain DSM 244 / SL1) (Ectothiorhodospira halophila (strain DSM 244 / SL1)).